The following is a 531-amino-acid chain: Peptide chain release factor 3 (531 aa).

Residues Arg-10–Lys-278 form the tr-type G domain. Residues Ser-19–Thr-26, Asp-87–His-91, and Asn-141–Asp-144 each bind GTP.

Belongs to the TRAFAC class translation factor GTPase superfamily. Classic translation factor GTPase family. PrfC subfamily.

Its subcellular location is the cytoplasm. In terms of biological role, increases the formation of ribosomal termination complexes and stimulates activities of RF-1 and RF-2. It binds guanine nucleotides and has strong preference for UGA stop codons. It may interact directly with the ribosome. The stimulation of RF-1 and RF-2 is significantly reduced by GTP and GDP, but not by GMP. The protein is Peptide chain release factor 3 of Neisseria meningitidis serogroup A / serotype 4A (strain DSM 15465 / Z2491).